The primary structure comprises 279 residues: Shikimate dehydrogenase (NADP(+)) (279 aa).

Shikimate-binding positions include 21-23 (SKS) and Thr-68. The Proton acceptor role is filled by Lys-72. Glu-84 contacts NADP(+). Asn-93 and Asp-109 together coordinate shikimate. NADP(+) is bound by residues 133-137 (GAGGA), 157-162 (NRTQAK), and Met-220. Residue Tyr-222 participates in shikimate binding. Gly-244 is an NADP(+) binding site.

This sequence belongs to the shikimate dehydrogenase family. Homodimer.

The catalysed reaction is shikimate + NADP(+) = 3-dehydroshikimate + NADPH + H(+). The protein operates within metabolic intermediate biosynthesis; chorismate biosynthesis; chorismate from D-erythrose 4-phosphate and phosphoenolpyruvate: step 4/7. Its function is as follows. Involved in the biosynthesis of the chorismate, which leads to the biosynthesis of aromatic amino acids. Catalyzes the reversible NADPH linked reduction of 3-dehydroshikimate (DHSA) to yield shikimate (SA). This chain is Shikimate dehydrogenase (NADP(+)), found in Shewanella halifaxensis (strain HAW-EB4).